The chain runs to 89 residues: MGIVMVKLKVMPVSPEVNKDELSAKIKETVESMDIICRNIEVEPLAFGLYAVFPLIEMEEKEGGTEPVEEALANLDDVESVESVEVSLV.

The protein belongs to the EF-1-beta/EF-1-delta family.

Its function is as follows. Promotes the exchange of GDP for GTP in EF-1-alpha/GDP, thus allowing the regeneration of EF-1-alpha/GTP that could then be used to form the ternary complex EF-1-alpha/GTP/AAtRNA. This Methanococcus aeolicus (strain ATCC BAA-1280 / DSM 17508 / OCM 812 / Nankai-3) protein is Elongation factor 1-beta.